Reading from the N-terminus, the 222-residue chain is Abasic site processing protein YedK (222 aa).

Residue C2 is the Nucleophile of the active site. Residue C2 is modified to Thiazolidine linkage to a ring-opened DNA abasic site. Residue E105 is part of the active site.

It belongs to the SOS response-associated peptidase family.

With respect to regulation, formation and reversal of DNA-protein cross-link depends on DNA context. Catalyzes formation of the thiazolidine linkage in presence of abasic sites in single-stranded DNA. Mediates the reversal of the thiazolidine cross-link in presence of double stranded DNA. Sensor of abasic sites in single-stranded DNA (ssDNA) required to preserve genome integrity by promoting error-free repair of abasic sites. Recognizes and binds abasic sites in ssDNA at replication forks and chemically modifies the lesion by forming a covalent cross-link with DNA: forms a stable thiazolidine linkage between a ring-opened abasic site and the alpha-amino and sulfhydryl substituents of its N-terminal catalytic cysteine residue. The DNA-protein cross-link is then reversed: able to catalyze the reversal of the thiazolidine cross-link and cycle between a cross-link and a non-cross-linked state depending on DNA context: mediates self-reversal of the thiazolidine cross-link in double stranded DNA. May act as a protease: mediates autocatalytic processing of its N-terminal methionine in order to expose the catalytic cysteine. The chain is Abasic site processing protein YedK from Escherichia coli (strain K12).